The sequence spans 239 residues: Putative 3-methyladenine DNA glycosylase (239 aa).

It belongs to the DNA glycosylase MPG family.

The sequence is that of Putative 3-methyladenine DNA glycosylase from Pseudomonas aeruginosa (strain LESB58).